The primary structure comprises 341 residues: Pectate trisaccharide-lyase (341 aa).

The signal sequence occupies residues 1–27; the sequence is MKKLISIIFIFVLGVVGSLTAAVSAEA. The propeptide occupies 28 to 39; the sequence is ASALNSGKVNPL. PbH1 repeat units lie at residues 131–156 and 158–186; these read ANNI…GIEG and SKNI…FDVK. Aspartate 150, aspartate 180, and aspartate 184 together coordinate Ca(2+). Residue arginine 233 is part of the active site. 2 PbH1 repeats span residues 262–283 and 287–322; these read GARI…VSWY and PGYW…SLDN.

This sequence belongs to the polysaccharide lyase 1 family. It depends on Ca(2+) as a cofactor.

It is found in the secreted. The enzyme catalyses eliminative cleavage of unsaturated trigalacturonate as the major product from the reducing end of polygalacturonic acid/pectate.. In terms of biological role, cleaves unsaturated oligo-galacturonides from pectin. The major product is trigalacturonate; digalacturonate and tetragalacturonate are also produced. Activity on methylated pectins decreases with an increasing degree of methylation. This chain is Pectate trisaccharide-lyase, found in Bacillus licheniformis (strain ATCC 14580 / DSM 13 / JCM 2505 / CCUG 7422 / NBRC 12200 / NCIMB 9375 / NCTC 10341 / NRRL NRS-1264 / Gibson 46).